Reading from the N-terminus, the 245-residue chain is Exosome complex component RRP41 (245 aa).

Ala2 is modified (N-acetylalanine).

It belongs to the RNase PH family. Component of the RNA exosome core complex (Exo-9), composed of EXOSC1, EXOSC2, EXOSC3, EXOSC4, EXOSC5, EXOSC6, EXOSC7, EXOSC8 and EXOSC9; within the complex interacts with EXOSC2, EXOSC7 and EXOSC9. The catalytically inactive RNA exosome core complex (Exo-9) associates with the catalytic subunit EXOSC10/RRP6. Exo-9 may associate with DIS3 to form the nucleolar exosome complex, or DIS3L to form the cytoplasmic exosome complex. Exo-9 is formed by a hexameric base ring consisting of the heterodimers EXOSC4-EXOSC9, EXOSC5-EXOSC8 and EXOSC6-EXOSC7, and a cap ring consisting of EXOSC1, EXOSC2 and EXOSC3. The RNA exosome complex associates with cofactors C1D/RRP47, MPHOSPH6/MPP6 and MTREX/MTR4. Interacts with DDX60. Interacts with DIS3; the interaction is direct.

The protein localises to the cytoplasm. The protein resides in the nucleus. It localises to the nucleolus. Its subcellular location is the nucleoplasm. In terms of biological role, non-catalytic component of the RNA exosome complex which has 3'-&gt;5' exoribonuclease activity and participates in a multitude of cellular RNA processing and degradation events. In the nucleus, the RNA exosome complex is involved in proper maturation of stable RNA species such as rRNA, snRNA and snoRNA, in the elimination of RNA processing by-products and non-coding 'pervasive' transcripts, such as antisense RNA species and promoter-upstream transcripts (PROMPTs), and of mRNAs with processing defects, thereby limiting or excluding their export to the cytoplasm. The RNA exosome may be involved in Ig class switch recombination (CSR) and/or Ig variable region somatic hypermutation (SHM) by targeting AICDA deamination activity to transcribed dsDNA substrates. In the cytoplasm, the RNA exosome complex is involved in general mRNA turnover and specifically degrades inherently unstable mRNAs containing AU-rich elements (AREs) within their 3' untranslated regions, and in RNA surveillance pathways, preventing translation of aberrant mRNAs. It seems to be involved in degradation of histone mRNA. The catalytic inactive RNA exosome core complex of 9 subunits (Exo-9) is proposed to play a pivotal role in the binding and presentation of RNA for ribonucleolysis, and to serve as a scaffold for the association with catalytic subunits and accessory proteins or complexes. EXOSC4 binds to ARE-containing RNAs. The sequence is that of Exosome complex component RRP41 (EXOSC4) from Homo sapiens (Human).